We begin with the raw amino-acid sequence, 517 residues long: Histone H4 transcription factor (517 aa).

C2H2-type zinc fingers lie at residues 15 to 39 (LQCE…VTQH), 129 to 153 (FLCL…VEAH), and 169 to 193 (VLCG…LRSH). The segment at 199–221 (VACPTCGGMFANNTKFLDHIRRQ) adopts a C2H2-type 4; degenerate zinc-finger fold. 5 C2H2-type zinc fingers span residues 229 to 251 (FQCS…MRNH), 255 to 278 (YKCP…RFRH), 284 to 306 (FKCD…LDTH), 312 to 337 (YRCD…RKVH), and 345 to 368 (YKCH…RKKH). An interaction with NPAT region spans residues 373 to 517 (PSGHPRFRYK…IAEEPEIQMV (145 aa)). The required for activation of histone H4 transcription and contributes to DNA-binding stretch occupies residues 374–407 (SGHPRFRYKEHEDGYMRLQLVRYESVELTQQLLR). The segment at 431–460 (TVPGEPGRKEEEEEGKGSEGTALSASQDNP) is disordered. Over residues 451–460 (TALSASQDNP) the composition is skewed to polar residues.

As to quaternary structure, binds MBD2 and a histone deacetylase complex. Interacts with NPAT. Post-translationally, ubiquitinated. Ubiquitination may lead to proteasome-mediated degradation. In terms of tissue distribution, ubiquitous. Highly expressed in brain, heart, skeletal muscle, spleen, kidney, small intestine, placenta and liver.

The protein resides in the nucleus. In terms of biological role, transcriptional repressor that binds to the consensus sequence 5'-CGGACGTT-3' and to the RB1 promoter. Transcriptional activator that promotes histone H4 gene transcription at the G1/S phase transition in conjunction with NPAT. Also activates transcription of the ATM and PRKDC genes. Autoregulates its expression by associating with its own promoter. This Homo sapiens (Human) protein is Histone H4 transcription factor (HINFP).